Here is a 607-residue protein sequence, read N- to C-terminus: NAD-dependent protein deacetylase sir-2.1 (607 aa).

The interval M1–N68 is disordered. A compositionally biased stretch (low complexity) spans E55 to S64. The region spanning K128–T401 is the Deacetylase sirtuin-type domain. Residues G153–Y172 and Q237–D240 contribute to the NAD(+) site. Residue H255 is the Proton acceptor of the active site. Zn(2+)-binding residues include C263, C266, C287, and C290. NAD(+)-binding positions include G327 to S329, N352 to E354, and C369. The interval E426–E453 is disordered.

It belongs to the sirtuin family. Class I subfamily. As to quaternary structure, interacts with ftt-2 and par-5. Interacts with daf-16 following heat-shock, which causes daf-16 to accumulate in the nucleus. Interaction with daf-16 is promoted by ftt-2. Interacts with transcriptional coregulator hcf-1. Zn(2+) is required as a cofactor.

The protein localises to the nucleus. It localises to the cytoplasm. The enzyme catalyses N(6)-acetyl-L-lysyl-[protein] + NAD(+) + H2O = 2''-O-acetyl-ADP-D-ribose + nicotinamide + L-lysyl-[protein]. In terms of biological role, NAD-dependent deacetylase. Involved in metabolism, apoptosis, response to oxidative stress, response to DNA damage, and determination of lifespan. Required for a reduction of the 'Lys-16' acetylation of histone H4 (H4K16ac) on dosage-compensated X chromosomes in hermaphrodites. Plays a role in germ cell and somatic cell apoptosis in response to DNA damage. Functions upstream of daf-16/Forkhead box protein O in the Insulin/IGF-1-like signaling (IIS) mediated pathway, promoting daf-16 mediated transcriptional activation and increased lifespan. May also regulate lifespan independently of daf-16 by modulating the transcription of genes involved in the stress response of the endoplasmic reticulum (ER). Functions upstream of transcriptional coregulator hcf-1, perhaps acting independently of the IIS mediated pathway, to modulate lifespan and oxidative stress response. Acts upstream of the nicotinic acid metabolism pathway, which may be linked to the regulation of longevity. Plays a role in ascaroside-mediated longevity and stress resistance. In Caenorhabditis elegans, this protein is NAD-dependent protein deacetylase sir-2.1.